The following is a 474-amino-acid chain: Ribulose bisphosphate carboxylase large chain (474 aa).

Residues N123 and T173 each contribute to the substrate site. Catalysis depends on K175, which acts as the Proton acceptor. Residue K177 coordinates substrate. Residues K201, D203, and E204 each coordinate Mg(2+). An N6-carboxylysine modification is found at K201. The active-site Proton acceptor is the H293. Residues R294, H326, and S378 each contribute to the substrate site.

This sequence belongs to the RuBisCO large chain family. Type I subfamily. In terms of assembly, heterohexadecamer of 8 large chains and 8 small chains; disulfide-linked. The disulfide link is formed within the large subunit homodimers. Mg(2+) is required as a cofactor. The disulfide bond which can form in the large chain dimeric partners within the hexadecamer appears to be associated with oxidative stress and protein turnover.

It is found in the carboxysome. The catalysed reaction is 2 (2R)-3-phosphoglycerate + 2 H(+) = D-ribulose 1,5-bisphosphate + CO2 + H2O. It catalyses the reaction D-ribulose 1,5-bisphosphate + O2 = 2-phosphoglycolate + (2R)-3-phosphoglycerate + 2 H(+). In terms of biological role, ruBisCO catalyzes two reactions: the carboxylation of D-ribulose 1,5-bisphosphate, the primary event in carbon dioxide fixation, as well as the oxidative fragmentation of the pentose substrate in the photorespiration process. Both reactions occur simultaneously and in competition at the same active site. This Synechococcus sp protein is Ribulose bisphosphate carboxylase large chain.